Here is a 338-residue protein sequence, read N- to C-terminus: Heat-inducible transcription repressor HrcA (338 aa).

Belongs to the HrcA family.

Negative regulator of class I heat shock genes (grpE-dnaK-dnaJ and groELS operons). Prevents heat-shock induction of these operons. This is Heat-inducible transcription repressor HrcA from Bacillus thuringiensis (strain Al Hakam).